Consider the following 1343-residue polypeptide: DNA-directed RNA polymerase subunit beta (1343 aa).

Belongs to the RNA polymerase beta chain family. The RNAP catalytic core consists of 2 alpha, 1 beta, 1 beta' and 1 omega subunit. When a sigma factor is associated with the core the holoenzyme is formed, which can initiate transcription.

The catalysed reaction is RNA(n) + a ribonucleoside 5'-triphosphate = RNA(n+1) + diphosphate. Functionally, DNA-dependent RNA polymerase catalyzes the transcription of DNA into RNA using the four ribonucleoside triphosphates as substrates. The chain is DNA-directed RNA polymerase subunit beta from Haemophilus influenzae (strain ATCC 51907 / DSM 11121 / KW20 / Rd).